The following is a 1114-amino-acid chain: Putative surface protein SAV2496/SAV2497 (1114 aa).

A signal peptide spans 1–50; that stretch reads MRDKKGPVNKRVDFLSNKLNKYSIRKFTVGTASILIGSLMYLGTQQEAEA. Disordered regions lie at residues 76–116, 440–473, and 496–1088; these read TNKD…EDTP, KFNPDLAPGTEKVTREGQKGEKTITTPTLKNPLT, and EYGP…TGLE. Basic and acidic residues-rich tracts occupy residues 96-116, 451-461, 505-523, 554-570, and 579-589; these read DTIEHEASVKAEDISKKEDTP, KVTREGQKGEK, GHRDEFDPKLPTGEKEEVP, and SIVEKEEIPFEKERKFN. The G5 1 domain maps to 419–501; the sequence is SAKNNNRIRK…NELTEYGPET (83 aa). The G5 2 domain occupies 547–628; it reads YGPVKGDSIV…NELTEYGPET (82 aa). A compositionally biased stretch (low complexity) spans 590–604; it reads TTTPTLKNPLTGEII. Basic and acidic residues-rich tracts occupy residues 605-618, 632-650, 681-697, 706-716, 733-746, 760-778, 809-825, 834-844, 861-874, 918-929, and 946-965; these read SKGESKEEITKDPI, GHRDEFDPKLPTGEKEEVP, SIVEKEEIPFKKERKFN, KVTREGQKGEK, SIVEKEEIPFEKERKFN, SKGESKEEITKDPV, KVIEEPVDDVIK, and FETKREFNPKLQPGEERVKQ. One can recognise a G5 3 domain in the interval 674 to 756; that stretch reads YGPVKGDSIV…NELTEYGPET (83 aa). Residues 802–884 enclose the G5 4 domain; the sequence is YGPVKGDSIV…NELTEFGGEK (83 aa). One can recognise a G5 5 domain in the interval 930 to 1012; that stretch reads HGPKTGTPET…DKIVEFGGEK (83 aa). Polar residues predominate over residues 968 to 982; that stretch reads QPGSKTITTPITVNP. Over residues 996-1026 the composition is skewed to basic and acidic residues; that stretch reads EITKQPVDKIVEFGGEKPKDPKGPENPEKPS. The LPXTG sorting signal motif lies at 1082–1086; sequence LPKTG. Pentaglycyl murein peptidoglycan amidated threonine is present on Thr1085. Positions 1086 to 1114 are cleaved as a propeptide — removed by sortase; it reads GLESTQKGLIFSSIIGIAGLMLLARRRKN.

Its subcellular location is the secreted. It localises to the cell wall. The protein is Putative surface protein SAV2496/SAV2497 of Staphylococcus aureus (strain Mu50 / ATCC 700699).